The following is a 562-amino-acid chain: Bacillolysin (562 aa).

Residues 1 to 24 (MKKKKQALKVLLSVGILSSSFAFA) form the signal peptide. A propeptide spans 25–245 (HTSSAAPNNV…KQAAKPAAKP (221 aa)) (activation peptide). 3 residues coordinate Ca(2+): Asp303, Asp305, and Asp384. A Zn(2+)-binding site is contributed by His388. Glu389 is an active-site residue. Zn(2+) contacts are provided by His392 and Glu412. Residues Glu423, Asn429, Asp431, Glu433, Glu436, Tyr439, Thr440, and Asp446 each coordinate Ca(2+). The active-site Proton donor is the His477.

This sequence belongs to the peptidase M4 family. Ca(2+) serves as cofactor. Requires Zn(2+) as cofactor.

Its subcellular location is the secreted. The enzyme catalyses Similar, but not identical, to that of thermolysin.. In terms of biological role, extracellular zinc metalloprotease. The sequence is that of Bacillolysin from Priestia megaterium (strain ATCC 14581 / DSM 32 / CCUG 1817 / JCM 2506 / NBRC 15308 / NCIMB 9376 / NCTC 10342 / NRRL B-14308 / VKM B-512 / Ford 19) (Bacillus megaterium).